Here is a 315-residue protein sequence, read N- to C-terminus: GTP cyclohydrolase MptA 1 (315 aa).

Belongs to the GTP cyclohydrolase IV family. Homodimer. Fe(2+) is required as a cofactor.

It carries out the reaction GTP + H2O = 7,8-dihydroneopterin 2',3'-cyclic phosphate + formate + diphosphate + H(+). The protein operates within cofactor biosynthesis; 5,6,7,8-tetrahydromethanopterin biosynthesis. Converts GTP to 7,8-dihydro-D-neopterin 2',3'-cyclic phosphate, the first intermediate in the biosynthesis of coenzyme methanopterin. This Methanocella arvoryzae (strain DSM 22066 / NBRC 105507 / MRE50) protein is GTP cyclohydrolase MptA 1.